The chain runs to 243 residues: Max-interacting protein 1 (243 aa).

Residues 76–128 enclose the bHLH domain; it reads HYRSTHNELEKNRRAHLRLCLERLKTLIPLGPECSRHTTLGLLNKAKAHIKKL. The tract at residues 164 to 235 is disordered; the sequence is EAERIRTDSM…TASDEGYSSC (72 aa). Acidic residues predominate over residues 188–198; sequence DQEEMEVDVES. Residues 222–235 are compositionally biased toward polar residues; it reads SLQSTASDEGYSSC.

In terms of assembly, efficient DNA binding requires dimerization with another bHLH protein. Binds DNA as a heterodimer with MAX.

The protein resides in the nucleus. Functionally, transcriptional repressor. MXI1 binds with MAX to form a sequence-specific DNA-binding protein complex which recognizes the core sequence 5'-CAC[GA]TG-3'. MXI1 thus antagonizes MYC transcriptional activity by competing for MAX. The chain is Max-interacting protein 1 (mxi1) from Danio rerio (Zebrafish).